Reading from the N-terminus, the 1430-residue chain is DNA-directed RNA polymerase subunit beta' (1430 aa).

Zn(2+)-binding residues include Cys-71, Cys-73, Cys-86, and Cys-89. Positions 461, 463, and 465 each coordinate Mg(2+). Residues Cys-815, Cys-889, Cys-896, and Cys-899 each contribute to the Zn(2+) site. Residues 1388 to 1430 (RRQEAPAPAATPEQQAEEVFASLGQGEGEGPSPSDEASGPEVE) are disordered. Positions 1392–1405 (APAPAATPEQQAEE) are enriched in low complexity.

This sequence belongs to the RNA polymerase beta' chain family. As to quaternary structure, the RNAP catalytic core consists of 2 alpha, 1 beta, 1 beta' and 1 omega subunit. When a sigma factor is associated with the core the holoenzyme is formed, which can initiate transcription. Requires Mg(2+) as cofactor. Zn(2+) is required as a cofactor.

The enzyme catalyses RNA(n) + a ribonucleoside 5'-triphosphate = RNA(n+1) + diphosphate. Its function is as follows. DNA-dependent RNA polymerase catalyzes the transcription of DNA into RNA using the four ribonucleoside triphosphates as substrates. This is DNA-directed RNA polymerase subunit beta' from Halorhodospira halophila (strain DSM 244 / SL1) (Ectothiorhodospira halophila (strain DSM 244 / SL1)).